Here is a 529-residue protein sequence, read N- to C-terminus: MTLSPYLQEVAKRRTFAIISHPDAGKTTITEKVLLFGQAIQTAGTVKGRGSSQHAKSDWMEMEKQRGISITTSVMQFPYHDCLVNLLDTPGHEDFSEDTYRTLTAVDCCLMVIDAAKGVEDRTRKLMEVTRLRDTPILTFMNKLDRDIRDPMEVMDEVERELKIACAPITWPIGCGKLFKGVYHLYKDEVYLYQTGKGHTIQEVRIVKGLDNPELETAVGEELAVQLRDELELVKGASHEFDHELFLAGEITPVFFGTALGNFGVDHMLDGLIEWAPQPMPRKTDTRLVEASEEKFTGFVFKIQANMDPKHRDRVAFLRVVSGQYEKGMKLRQVRIGKDVVISDALTFMAGDRSHVEEAYPGDIIGLHNHGTIQIGDTFTQGEMMKFTGIPNFAPELFRRIRLRDPLKQKQLLKGLVQLSEEGAVQVFRPISNNDLIVGAVGVLQFDVVVARLKSEYNVEAIYESVNVATARWVECSDVKKFEEFKRKNEIQLALDGGDNLTYIAPTMVNLNLTQERYPDVQFRKTREH.

The tr-type G domain occupies 11 to 280 (AKRRTFAIIS…GLIEWAPQPM (270 aa)). GTP is bound by residues 20 to 27 (SHPDAGKT), 88 to 92 (DTPGH), and 142 to 145 (NKLD).

The protein belongs to the TRAFAC class translation factor GTPase superfamily. Classic translation factor GTPase family. PrfC subfamily.

The protein resides in the cytoplasm. In terms of biological role, increases the formation of ribosomal termination complexes and stimulates activities of RF-1 and RF-2. It binds guanine nucleotides and has strong preference for UGA stop codons. It may interact directly with the ribosome. The stimulation of RF-1 and RF-2 is significantly reduced by GTP and GDP, but not by GMP. In Enterobacter sp. (strain 638), this protein is Peptide chain release factor 3.